The sequence spans 288 residues: ATP synthase gamma chain (288 aa).

This sequence belongs to the ATPase gamma chain family. F-type ATPases have 2 components, CF(1) - the catalytic core - and CF(0) - the membrane proton channel. CF(1) has five subunits: alpha(3), beta(3), gamma(1), delta(1), epsilon(1). CF(0) has three main subunits: a, b and c.

It localises to the cell inner membrane. Functionally, produces ATP from ADP in the presence of a proton gradient across the membrane. The gamma chain is believed to be important in regulating ATPase activity and the flow of protons through the CF(0) complex. In Vibrio parahaemolyticus serotype O3:K6 (strain RIMD 2210633), this protein is ATP synthase gamma chain.